Here is a 194-residue protein sequence, read N- to C-terminus: Small ribosomal subunit protein uS7 (194 aa).

This sequence belongs to the universal ribosomal protein uS7 family. Part of the 30S ribosomal subunit.

Its function is as follows. One of the primary rRNA binding proteins, it binds directly to 16S rRNA where it nucleates assembly of the head domain of the 30S subunit. Is located at the subunit interface close to the decoding center. The polypeptide is Small ribosomal subunit protein uS7 (Methanococcus vannielii (strain ATCC 35089 / DSM 1224 / JCM 13029 / OCM 148 / SB)).